The chain runs to 219 residues: Orotate phosphoribosyltransferase (219 aa).

Position 26 (lysine 26) interacts with 5-phospho-alpha-D-ribose 1-diphosphate. 34-35 (FF) provides a ligand contact to orotate. Residues 72-73 (YK), arginine 98, lysine 99, lysine 102, histidine 104, and 124-132 (DDVITAGTA) each bind 5-phospho-alpha-D-ribose 1-diphosphate. The orotate site is built by threonine 128 and arginine 156.

It belongs to the purine/pyrimidine phosphoribosyltransferase family. PyrE subfamily. Homodimer. Requires Mg(2+) as cofactor.

The enzyme catalyses orotidine 5'-phosphate + diphosphate = orotate + 5-phospho-alpha-D-ribose 1-diphosphate. Its pathway is pyrimidine metabolism; UMP biosynthesis via de novo pathway; UMP from orotate: step 1/2. Its function is as follows. Catalyzes the transfer of a ribosyl phosphate group from 5-phosphoribose 1-diphosphate to orotate, leading to the formation of orotidine monophosphate (OMP). The chain is Orotate phosphoribosyltransferase from Xanthomonas oryzae pv. oryzae (strain MAFF 311018).